Consider the following 548-residue polypeptide: Cytochrome P450 monooxygenase hepE (548 aa).

C485 provides a ligand contact to heme.

It belongs to the cytochrome P450 family. Requires heme as cofactor.

It functions in the pathway secondary metabolite biosynthesis. Functionally, cytochrome P450 monooxygenase; part of the gene cluster that mediates the biosynthesis of heptelidic acid (HA), a sesquiterpene lactone that acts as an inhibitor of glyceraldehyde-3-phosphatedehydrogenase (GAPDH) and a growth inhibitor of the salt-tolerant lactic acid bacteria in soy sauce brewing. In Aspergillus oryzae (strain ATCC 42149 / RIB 40) (Yellow koji mold), this protein is Cytochrome P450 monooxygenase hepE.